A 306-amino-acid chain; its full sequence is Putative S-adenosyl-L-methionine-dependent methyltransferase MAP_4190c (306 aa).

Residues D129 and 158 to 159 (DL) contribute to the S-adenosyl-L-methionine site.

Belongs to the UPF0677 family.

Exhibits S-adenosyl-L-methionine-dependent methyltransferase activity. This Mycolicibacterium paratuberculosis (strain ATCC BAA-968 / K-10) (Mycobacterium paratuberculosis) protein is Putative S-adenosyl-L-methionine-dependent methyltransferase MAP_4190c.